The sequence spans 430 residues: Adenylosuccinate synthetase (430 aa).

Residues 12–18 (GDEGKGK) and 40–42 (GHT) each bind GTP. Catalysis depends on Asp-13, which acts as the Proton acceptor. Residues Asp-13 and Gly-40 each coordinate Mg(2+). IMP contacts are provided by residues 13–16 (DEGK), 38–41 (NAGH), Thr-128, Arg-142, Gln-223, Thr-238, and Arg-302. The active-site Proton donor is His-41. Residue 298 to 304 (TTTGRPR) coordinates substrate. Residues Arg-304, 330–332 (SID), and 412–414 (SVG) each bind GTP.

This sequence belongs to the adenylosuccinate synthetase family. Homodimer. It depends on Mg(2+) as a cofactor.

The protein localises to the cytoplasm. The catalysed reaction is IMP + L-aspartate + GTP = N(6)-(1,2-dicarboxyethyl)-AMP + GDP + phosphate + 2 H(+). It participates in purine metabolism; AMP biosynthesis via de novo pathway; AMP from IMP: step 1/2. Its function is as follows. Plays an important role in the de novo pathway of purine nucleotide biosynthesis. Catalyzes the first committed step in the biosynthesis of AMP from IMP. The chain is Adenylosuccinate synthetase from Streptococcus pyogenes serotype M1.